The following is a 245-amino-acid chain: 1-(5-phosphoribosyl)-5-[(5-phosphoribosylamino)methylideneamino] imidazole-4-carboxamide isomerase (245 aa).

The Proton acceptor role is filled by aspartate 11. Residue aspartate 132 is the Proton donor of the active site.

This sequence belongs to the HisA/HisF family.

It is found in the cytoplasm. It carries out the reaction 1-(5-phospho-beta-D-ribosyl)-5-[(5-phospho-beta-D-ribosylamino)methylideneamino]imidazole-4-carboxamide = 5-[(5-phospho-1-deoxy-D-ribulos-1-ylimino)methylamino]-1-(5-phospho-beta-D-ribosyl)imidazole-4-carboxamide. It participates in amino-acid biosynthesis; L-histidine biosynthesis; L-histidine from 5-phospho-alpha-D-ribose 1-diphosphate: step 4/9. This is 1-(5-phosphoribosyl)-5-[(5-phosphoribosylamino)methylideneamino] imidazole-4-carboxamide isomerase from Bacillus pumilus (strain SAFR-032).